The following is a 219-amino-acid chain: Uracil-DNA glycosylase (219 aa).

Catalysis depends on Asp-61, which acts as the Proton acceptor.

This sequence belongs to the uracil-DNA glycosylase (UDG) superfamily. UNG family.

Its subcellular location is the cytoplasm. The enzyme catalyses Hydrolyzes single-stranded DNA or mismatched double-stranded DNA and polynucleotides, releasing free uracil.. In terms of biological role, excises uracil residues from the DNA which can arise as a result of misincorporation of dUMP residues by DNA polymerase or due to deamination of cytosine. In Neisseria meningitidis serogroup A / serotype 4A (strain DSM 15465 / Z2491), this protein is Uracil-DNA glycosylase.